Here is a 363-residue protein sequence, read N- to C-terminus: tRNA N6-adenosine threonylcarbamoyltransferase (363 aa).

Fe cation contacts are provided by H117 and H121. Substrate-binding positions include 139–143 (LVSGG), D172, G185, and N287. Residue D315 coordinates Fe cation.

The protein belongs to the KAE1 / TsaD family. The cofactor is Fe(2+).

It localises to the cytoplasm. The catalysed reaction is L-threonylcarbamoyladenylate + adenosine(37) in tRNA = N(6)-L-threonylcarbamoyladenosine(37) in tRNA + AMP + H(+). Functionally, required for the formation of a threonylcarbamoyl group on adenosine at position 37 (t(6)A37) in tRNAs that read codons beginning with adenine. Is involved in the transfer of the threonylcarbamoyl moiety of threonylcarbamoyl-AMP (TC-AMP) to the N6 group of A37, together with TsaE and TsaB. TsaD likely plays a direct catalytic role in this reaction. In Cereibacter sphaeroides (strain ATCC 17025 / ATH 2.4.3) (Rhodobacter sphaeroides), this protein is tRNA N6-adenosine threonylcarbamoyltransferase.